Reading from the N-terminus, the 107-residue chain is Insulin (107 aa).

The signal sequence occupies residues 1-24 (MALWIRSLPLLALLVFSGPGTSYA). Cystine bridges form between Cys31–Cys93, Cys43–Cys106, and Cys92–Cys97. The propeptide at 57–84 (DVEQPLVSSPLRGEAGVLPFQQEEYEKV) is c peptide.

This sequence belongs to the insulin family. As to quaternary structure, heterodimer of a B chain and an A chain linked by two disulfide bonds.

It localises to the secreted. Functionally, insulin decreases blood glucose concentration. It increases cell permeability to monosaccharides, amino acids and fatty acids. It accelerates glycolysis, the pentose phosphate cycle, and glycogen synthesis in liver. This chain is Insulin (INS), found in Gallus gallus (Chicken).